Here is a 446-residue protein sequence, read N- to C-terminus: Argininosuccinate synthase (446 aa).

ATP contacts are provided by residues 17–25 (AFSGGLDTS) and A43. Y99 contributes to the L-citrulline binding site. Residues G129 and T131 each contribute to the ATP site. 3 residues coordinate L-aspartate: T131, N135, and D136. L-citrulline is bound at residue N135. Residue D136 coordinates ATP. L-citrulline is bound by residues R139 and S192. D194 is a binding site for ATP. L-citrulline-binding residues include T201, E203, and E280.

Belongs to the argininosuccinate synthase family. Type 2 subfamily. In terms of assembly, homotetramer.

It is found in the cytoplasm. The enzyme catalyses L-citrulline + L-aspartate + ATP = 2-(N(omega)-L-arginino)succinate + AMP + diphosphate + H(+). It participates in amino-acid biosynthesis; L-arginine biosynthesis; L-arginine from L-ornithine and carbamoyl phosphate: step 2/3. The polypeptide is Argininosuccinate synthase (Methylibium petroleiphilum (strain ATCC BAA-1232 / LMG 22953 / PM1)).